The sequence spans 317 residues: Tumor necrosis factor ligand superfamily member 11 (317 aa).

Residues 1–16 are compositionally biased toward basic and acidic residues; it reads MRRASRDYTKYLRGSE. Residues 1–43 are disordered; it reads MRRASRDYTKYLRGSEEMGGGPGAPHEGPLHAPPPPAPHQPPA. Residues 1 to 47 lie on the Cytoplasmic side of the membrane; it reads MRRASRDYTKYLRGSEEMGGGPGAPHEGPLHAPPPPAPHQPPAASRS. The segment covering 31 to 41 has biased composition (pro residues); the sequence is HAPPPPAPHQP. A helical; Signal-anchor for type II membrane protein transmembrane segment spans residues 48-68; it reads MFVALLGLGLGQVVCSVALFF. Topologically, residues 69–317 are extracellular; that stretch reads YFRAQMDPNR…FGAFKVRDID (249 aa). The THD domain maps to 164–313; that stretch reads PFAHLTINAT…DATYFGAFKV (150 aa). N171 and N198 each carry an N-linked (GlcNAc...) asparagine glycan.

It belongs to the tumor necrosis factor family. In terms of assembly, homotrimer. Interacts with TNFRSF11B. Interacts with TNFRSF11A. Interacts with FBN1 (via N-terminal domain) in a Ca(+2)-dependent manner. Interacts with TNFAIP6 (via both Link and CUB domains). In terms of processing, the soluble form of isoform 1 derives from the membrane form by proteolytic processing. The cleavage may be catalyzed by ADAM17. In terms of tissue distribution, highest in the peripheral lymph nodes, weak in spleen, peripheral blood Leukocytes, bone marrow, heart, placenta, skeletal muscle, stomach and thyroid.

The protein localises to the cell membrane. Its subcellular location is the cytoplasm. It is found in the secreted. Cytokine that binds to TNFRSF11B/OPG and to TNFRSF11A/RANK. Osteoclast differentiation and activation factor. Augments the ability of dendritic cells to stimulate naive T-cell proliferation. May be an important regulator of interactions between T-cells and dendritic cells and may play a role in the regulation of the T-cell-dependent immune response. May also play an important role in enhanced bone-resorption in humoral hypercalcemia of malignancy. Induces osteoclastogenesis by activating multiple signaling pathways in osteoclast precursor cells, chief among which is induction of long lasting oscillations in the intracellular concentration of Ca (2+) resulting in the activation of NFATC1, which translocates to the nucleus and induces osteoclast-specific gene transcription to allow differentiation of osteoclasts. During osteoclast differentiation, in a TMEM64 and ATP2A2-dependent manner induces activation of CREB1 and mitochondrial ROS generation necessary for proper osteoclast generation. The polypeptide is Tumor necrosis factor ligand superfamily member 11 (TNFSF11) (Homo sapiens (Human)).